Consider the following 75-residue polypeptide: Translation initiation factor IF-1 1 (75 aa).

The S1-like domain occupies 1-74 (MARSDMIEVD…TRGRIVYRYR (74 aa)).

The protein belongs to the IF-1 family. Component of the 30S ribosomal translation pre-initiation complex which assembles on the 30S ribosome in the order IF-2 and IF-3, IF-1 and N-formylmethionyl-tRNA(fMet); mRNA recruitment can occur at any time during PIC assembly.

The protein resides in the cytoplasm. In terms of biological role, one of the essential components for the initiation of protein synthesis. Stabilizes the binding of IF-2 and IF-3 on the 30S subunit to which N-formylmethionyl-tRNA(fMet) subsequently binds. Helps modulate mRNA selection, yielding the 30S pre-initiation complex (PIC). Upon addition of the 50S ribosomal subunit IF-1, IF-2 and IF-3 are released leaving the mature 70S translation initiation complex. The protein is Translation initiation factor IF-1 1 of Symbiobacterium thermophilum (strain DSM 24528 / JCM 14929 / IAM 14863 / T).